The primary structure comprises 98 residues: Integration host factor subunit alpha (98 aa).

Residues 49 to 71 (FGNFDLRDKNQRPGRNPKTGEDI) are disordered.

The protein belongs to the bacterial histone-like protein family. As to quaternary structure, heterodimer of an alpha and a beta chain.

Its function is as follows. This protein is one of the two subunits of integration host factor, a specific DNA-binding protein that functions in genetic recombination as well as in transcriptional and translational control. This is Integration host factor subunit alpha from Shewanella sp. (strain MR-4).